Consider the following 288-residue polypeptide: Acetyl-coenzyme A carboxylase carboxyl transferase subunit beta (288 aa).

A CoA carboxyltransferase N-terminal domain is found at 34 to 288 (LFAKCPACKH…HLVAFHGGGQ (255 aa)). Residues Cys-38, Cys-41, Cys-56, and Cys-59 each contribute to the Zn(2+) site. The C4-type zinc-finger motif lies at 38-59 (CPACKHMIYKKDLGLAKICPTC).

The protein belongs to the AccD/PCCB family. Acetyl-CoA carboxylase is a heterohexamer composed of biotin carboxyl carrier protein (AccB), biotin carboxylase (AccC) and two subunits each of ACCase subunit alpha (AccA) and ACCase subunit beta (AccD). Requires Zn(2+) as cofactor.

The protein localises to the cytoplasm. The enzyme catalyses N(6)-carboxybiotinyl-L-lysyl-[protein] + acetyl-CoA = N(6)-biotinyl-L-lysyl-[protein] + malonyl-CoA. Its pathway is lipid metabolism; malonyl-CoA biosynthesis; malonyl-CoA from acetyl-CoA: step 1/1. In terms of biological role, component of the acetyl coenzyme A carboxylase (ACC) complex. Biotin carboxylase (BC) catalyzes the carboxylation of biotin on its carrier protein (BCCP) and then the CO(2) group is transferred by the transcarboxylase to acetyl-CoA to form malonyl-CoA. The polypeptide is Acetyl-coenzyme A carboxylase carboxyl transferase subunit beta (Streptococcus dysgalactiae subsp. equisimilis (strain GGS_124)).